Consider the following 269-residue polypeptide: Proline-rich protein 7 (269 aa).

The Extracellular segment spans residues 1 to 9 (MVMSQGTYT). Residues 1–44 (MVMSQGTYTFLTCFAGFWLIWGLIVLLCCFCSFLRRRLKRRQEE) are required for interaction with NMDA receptors. Residues 2–39 (VMSQGTYTFLTCFAGFWLIWGLIVLLCCFCSFLRRRLK) are required for membrane localization. The helical; Signal-anchor for type III membrane protein transmembrane segment at 10–30 (FLTCFAGFWLIWGLIVLLCCF) threads the bilayer. Residues 31–269 (CSFLRRRLKR…IPLFGRTTAV (239 aa)) are Cytoplasmic-facing. Disordered stretches follow at residues 63-83 (GSLAGSPPGLAPPPPPHRSRL) and 97-121 (PLLHHGPAPPHAHPHPHHHALPHPP). Ser-64 is modified (phosphoserine). Positions 108-117 (AHPHPHHHAL) are enriched in basic residues. Residues 146 to 166 (PCYEEAVLMAEPPPPYSEVLT) are required for internalization. A required for apoptosis induction region spans residues 146 to 269 (PCYEEAVLMA…IPLFGRTTAV (124 aa)). The PDZ-binding signature appears at 267 to 269 (TAV).

Forms a complex with NMDA receptor zeta subunit GRIN1 and epsilon subunit GRIN2B. Interacts with GRIN2B. Interacts with GRIN1; the interaction is reduced upon NMDA receptor activity. Found in a postsynaptic membrane complex with DLG4 and GRIN1. Interacts with DLG4 (via PDZ3 domain and to lesser degree via PDZ2 domain). Interacts with JUN. Found in a complex with JUN and FBXW7. Interacts with JUN and FBXW7; the interaction inhibits ubiquitination-mediated JUN degradation promoting its phosphorylation and transcriptional activity. Interacts with SRC. Palmitoylated. Post-translationally, tyrosine phosphorylated, possibly by SRC. As to expression, highly expressed in brain, moderately expressed in lymph nodes and T cells and low expression in thymus and spleen. Expressed in single positive progenitor thymocytes, particularly in CD8 single positive thymocytes.

It localises to the cell membrane. The protein resides in the postsynaptic cell membrane. Its subcellular location is the postsynaptic density membrane. It is found in the cytoplasm. The protein localises to the perinuclear region. It localises to the synapse. The protein resides in the cell projection. Its subcellular location is the dendrite. It is found in the nucleus. Its function is as follows. Acts as a synapse-to-nucleus messenger to promote NMDA receptor-mediated excitotoxicity in neurons in a JUN-dependent manner. Inhibits ubiquitination-mediated degradation and promotes phosphorylation and transcriptional activity of transcription factor JUN. Might play a redundant role in the regulation of T cell receptor signaling. Might promote apoptosis in T cells. This chain is Proline-rich protein 7 (Prr7), found in Mus musculus (Mouse).